We begin with the raw amino-acid sequence, 231 residues long: Ribonuclease 3 (231 aa).

The RNase III domain maps to 7-135 (IQAIESKLNF…ILGAVYLDGG (129 aa)). Glu-48 is a binding site for Mg(2+). Residue Asp-52 is part of the active site. 2 residues coordinate Mg(2+): Asn-121 and Glu-124. Glu-124 is an active-site residue. In terms of domain architecture, DRBM spans 160 to 229 (NPKNRLQQFT…AKQALSTHDN (70 aa)).

This sequence belongs to the ribonuclease III family. In terms of assembly, homodimer. Mg(2+) serves as cofactor.

It is found in the cytoplasm. The enzyme catalyses Endonucleolytic cleavage to 5'-phosphomonoester.. Digests double-stranded RNA. Involved in the processing of primary rRNA transcript to yield the immediate precursors to the large and small rRNAs (23S and 16S). Processes some mRNAs, and tRNAs when they are encoded in the rRNA operon. Processes pre-crRNA and tracrRNA of type II CRISPR loci if present in the organism. The sequence is that of Ribonuclease 3 from Chlamydia trachomatis serovar A (strain ATCC VR-571B / DSM 19440 / HAR-13).